The primary structure comprises 685 residues: Polyphosphate kinase (685 aa).

Residue Asn-45 participates in ATP binding. Mg(2+)-binding residues include Arg-375 and Arg-405. His-435 (phosphohistidine intermediate) is an active-site residue. Tyr-468, Arg-564, and His-592 together coordinate ATP.

Belongs to the polyphosphate kinase 1 (PPK1) family. It depends on Mg(2+) as a cofactor. An intermediate of this reaction is the autophosphorylated ppk in which a phosphate is covalently linked to a histidine residue through a N-P bond.

It carries out the reaction [phosphate](n) + ATP = [phosphate](n+1) + ADP. In terms of biological role, catalyzes the reversible transfer of the terminal phosphate of ATP to form a long-chain polyphosphate (polyP). This Neisseria gonorrhoeae (strain ATCC 700825 / FA 1090) protein is Polyphosphate kinase.